The primary structure comprises 156 residues: Large ribosomal subunit protein uL15 (156 aa).

A disordered region spans residues 1–56; the sequence is MDLSNLKPAEGATQAGQRLGRGEGSGRGGHSSTRGTKGQSSRSGSGTRPIWFEGGQ.

The protein belongs to the universal ribosomal protein uL15 family. As to quaternary structure, part of the 50S ribosomal subunit.

Functionally, binds to the 23S rRNA. This chain is Large ribosomal subunit protein uL15, found in Salinibacter ruber (strain DSM 13855 / M31).